The following is a 96-amino-acid chain: Large ribosomal subunit protein uL23 (96 aa).

This sequence belongs to the universal ribosomal protein uL23 family. Part of the 50S ribosomal subunit. Contacts protein L29, and trigger factor when it is bound to the ribosome.

In terms of biological role, one of the early assembly proteins it binds 23S rRNA. One of the proteins that surrounds the polypeptide exit tunnel on the outside of the ribosome. Forms the main docking site for trigger factor binding to the ribosome. This chain is Large ribosomal subunit protein uL23, found in Clostridioides difficile (strain 630) (Peptoclostridium difficile).